The primary structure comprises 271 residues: NH(3)-dependent NAD(+) synthetase (271 aa).

43-50 lines the ATP pocket; that stretch reads GISGGQDS. D49 lines the Mg(2+) pocket. R136 serves as a coordination point for deamido-NAD(+). T156 contacts ATP. Mg(2+) is bound at residue E161. Deamido-NAD(+) is bound by residues K169 and D176. Residues K185 and T207 each contribute to the ATP site. 256–257 lines the deamido-NAD(+) pocket; it reads HK.

Belongs to the NAD synthetase family. As to quaternary structure, homodimer.

It carries out the reaction deamido-NAD(+) + NH4(+) + ATP = AMP + diphosphate + NAD(+) + H(+). It participates in cofactor biosynthesis; NAD(+) biosynthesis; NAD(+) from deamido-NAD(+) (ammonia route): step 1/1. Catalyzes the ATP-dependent amidation of deamido-NAD to form NAD. Uses ammonia as a nitrogen source. The sequence is that of NH(3)-dependent NAD(+) synthetase from Tropheryma whipplei (strain TW08/27) (Whipple's bacillus).